The following is a 461-amino-acid chain: L-seryl-tRNA(Sec) selenium transferase (461 aa).

Lys294 bears the N6-(pyridoxal phosphate)lysine mark.

The protein belongs to the SelA family. The cofactor is pyridoxal 5'-phosphate.

The protein localises to the cytoplasm. The enzyme catalyses L-seryl-tRNA(Sec) + selenophosphate + H(+) = L-selenocysteinyl-tRNA(Sec) + phosphate. The protein operates within aminoacyl-tRNA biosynthesis; selenocysteinyl-tRNA(Sec) biosynthesis; selenocysteinyl-tRNA(Sec) from L-seryl-tRNA(Sec) (bacterial route): step 1/1. In terms of biological role, converts seryl-tRNA(Sec) to selenocysteinyl-tRNA(Sec) required for selenoprotein biosynthesis. This chain is L-seryl-tRNA(Sec) selenium transferase, found in Haemophilus influenzae (strain PittEE).